The following is a 237-amino-acid chain: MRVAVLSGAGISAESGVPTFRDDKNGLWARFDPYELSSTQGWLRNPERVWGWYLWRHYLVANVEPNDGHRAIAAWQDHAEVSVITQNVDDLHERAGSGAVHHLHGSLFEFRCARCGVPYTDALPEMPEPAIEVEPPVCDCGGLIRPDIVWFGEPLPEEPWRSAVEATGSADVMVVVGTSAIVYPAAGLPDLALARGTAVIEVNPEPTPLSGSATISIRESASQALPGLLERLPALLK.

Positions 1–235 constitute a Deacetylase sirtuin-type domain; the sequence is MRVAVLSGAG…PGLLERLPAL (235 aa). Residue 8-28 coordinates NAD(+); the sequence is GAGISAESGVPTFRDDKNGLW. Tyr-53 and Arg-56 together coordinate substrate. 86–89 is an NAD(+) binding site; it reads QNVD. His-104 (proton acceptor) is an active-site residue. Zn(2+) contacts are provided by Cys-112, Cys-115, Cys-138, and Cys-140. Residues 177–179, 203–205, and Ala-221 contribute to the NAD(+) site; these read GTS and NPE.

Belongs to the sirtuin family. Class III subfamily. Zn(2+) is required as a cofactor.

It localises to the cytoplasm. It catalyses the reaction N(6)-acetyl-L-lysyl-[protein] + NAD(+) + H2O = 2''-O-acetyl-ADP-D-ribose + nicotinamide + L-lysyl-[protein]. It carries out the reaction N(6)-succinyl-L-lysyl-[protein] + NAD(+) + H2O = 2''-O-succinyl-ADP-D-ribose + nicotinamide + L-lysyl-[protein]. NAD-dependent lysine deacetylase and desuccinylase that specifically removes acetyl and succinyl groups on target proteins. Modulates the activities of several proteins which are inactive in their acylated form. In Mycobacterium bovis (strain ATCC BAA-935 / AF2122/97), this protein is NAD-dependent protein deacylase.